We begin with the raw amino-acid sequence, 79 residues long: Short neurotoxin 8 (79 aa).

An N-terminal signal peptide occupies residues 1–21; that stretch reads MKTLLLTLVMVTIMCLDLGYT. Disulfide bonds link cysteine 24/cysteine 41, cysteine 34/cysteine 59, cysteine 63/cysteine 71, and cysteine 72/cysteine 77.

This sequence belongs to the three-finger toxin family. Short-chain subfamily. Type III alpha-neurotoxin sub-subfamily. In terms of tissue distribution, expressed by the venom gland.

Its subcellular location is the secreted. Functionally, binds with high affinity to muscle nicotinic acetylcholine receptor (nAChR) and hinders acetylcholine binding to the receptor, thereby impairing neuromuscular transmission. Causes muscle paralysis, spasms and increased respiration. This Pseudonaja textilis (Eastern brown snake) protein is Short neurotoxin 8.